The sequence spans 506 residues: Spindle pole body protein CSA6 (506 aa).

Disordered regions lie at residues 18–121 (SPIK…PNEN), 252–276 (EKHNNPQDSPPKVKIATPDPEVETQ), 329–429 (PSSP…YSIR), and 447–470 (KNDQKDTNSPEESNTDGKEEEEKV). The segment covering 38-48 (IDLRDYMDRQK) has biased composition (basic and acidic residues). The span at 50 to 59 (SRNYSDSEYT) shows a compositional bias: polar residues. Residues 63 to 72 (IKREKPETKQ) are compositionally biased toward basic and acidic residues. Over residues 94–119 (PTKNYSQHVMQERSAPNSPQKKSLPN) the composition is skewed to polar residues. Polar residues-rich tracts occupy residues 330–353 (SSPNHQTQPVFQSTPQSKVESVNL) and 361–389 (QPSHVSSNSQQNLSDKSRTSIPSRDNPSP). Basic and acidic residues-rich tracts occupy residues 412–422 (EWTREREERDG) and 461–470 (TDGKEEEEKV).

The protein resides in the cytoplasm. Its subcellular location is the cytoskeleton. It localises to the microtubule organizing center. It is found in the spindle pole body. Functionally, plays a role in mitotic spindle pole body organization, possibly at the point of spindle pole body separation. Required for mitotic exit. The polypeptide is Spindle pole body protein CSA6 (Candida tropicalis (strain ATCC MYA-3404 / T1) (Yeast)).